Here is a 228-residue protein sequence, read N- to C-terminus: Phosphatidylserine decarboxylase proenzyme (228 aa).

Ser-197 acts as the Schiff-base intermediate with substrate; via pyruvic acid in catalysis. At Ser-197 the chain carries Pyruvic acid (Ser); by autocatalysis.

It belongs to the phosphatidylserine decarboxylase family. PSD-A subfamily. As to quaternary structure, heterodimer of a large membrane-associated beta subunit and a small pyruvoyl-containing alpha subunit. The cofactor is pyruvate. Is synthesized initially as an inactive proenzyme. Formation of the active enzyme involves a self-maturation process in which the active site pyruvoyl group is generated from an internal serine residue via an autocatalytic post-translational modification. Two non-identical subunits are generated from the proenzyme in this reaction, and the pyruvate is formed at the N-terminus of the alpha chain, which is derived from the carboxyl end of the proenzyme. The post-translation cleavage follows an unusual pathway, termed non-hydrolytic serinolysis, in which the side chain hydroxyl group of the serine supplies its oxygen atom to form the C-terminus of the beta chain, while the remainder of the serine residue undergoes an oxidative deamination to produce ammonia and the pyruvoyl prosthetic group on the alpha chain.

It localises to the cell membrane. It carries out the reaction a 1,2-diacyl-sn-glycero-3-phospho-L-serine + H(+) = a 1,2-diacyl-sn-glycero-3-phosphoethanolamine + CO2. It participates in phospholipid metabolism; phosphatidylethanolamine biosynthesis; phosphatidylethanolamine from CDP-diacylglycerol: step 2/2. Catalyzes the formation of phosphatidylethanolamine (PtdEtn) from phosphatidylserine (PtdSer). The polypeptide is Phosphatidylserine decarboxylase proenzyme (Phocaeicola vulgatus (strain ATCC 8482 / DSM 1447 / JCM 5826 / CCUG 4940 / NBRC 14291 / NCTC 11154) (Bacteroides vulgatus)).